The following is a 180-amino-acid chain: Large ribosomal subunit protein uL5c (180 aa).

It belongs to the universal ribosomal protein uL5 family. In terms of assembly, part of the 50S ribosomal subunit; contacts the 5S rRNA.

Its subcellular location is the plastid. The protein resides in the chloroplast. Its function is as follows. Binds 5S rRNA, forms part of the central protuberance of the 50S subunit. In Chlorella vulgaris (Green alga), this protein is Large ribosomal subunit protein uL5c (rpl5).